We begin with the raw amino-acid sequence, 450 residues long: Probable glucoamylase (450 aa).

The signal sequence occupies residues methionine 1–alanine 16. Positions glutamate 17–glutamate 28 are excised as a propeptide. Tryptophan 147 serves as a coordination point for substrate. Aspartate 203 acts as the Proton acceptor in catalysis. Glutamate 206 functions as the Proton donor in the catalytic mechanism. N-linked (GlcNAc...) asparagine glycans are attached at residues asparagine 383 and asparagine 409.

Belongs to the glycosyl hydrolase 15 family.

The catalysed reaction is Hydrolysis of terminal (1-&gt;4)-linked alpha-D-glucose residues successively from non-reducing ends of the chains with release of beta-D-glucose.. In Schizosaccharomyces pombe (strain 972 / ATCC 24843) (Fission yeast), this protein is Probable glucoamylase (meu17).